Here is a 100-residue protein sequence, read N- to C-terminus: Aspartyl/glutamyl-tRNA(Asn/Gln) amidotransferase subunit C (100 aa).

It belongs to the GatC family. In terms of assembly, heterotrimer of A, B and C subunits.

The enzyme catalyses L-glutamyl-tRNA(Gln) + L-glutamine + ATP + H2O = L-glutaminyl-tRNA(Gln) + L-glutamate + ADP + phosphate + H(+). The catalysed reaction is L-aspartyl-tRNA(Asn) + L-glutamine + ATP + H2O = L-asparaginyl-tRNA(Asn) + L-glutamate + ADP + phosphate + 2 H(+). Its function is as follows. Allows the formation of correctly charged Asn-tRNA(Asn) or Gln-tRNA(Gln) through the transamidation of misacylated Asp-tRNA(Asn) or Glu-tRNA(Gln) in organisms which lack either or both of asparaginyl-tRNA or glutaminyl-tRNA synthetases. The reaction takes place in the presence of glutamine and ATP through an activated phospho-Asp-tRNA(Asn) or phospho-Glu-tRNA(Gln). This chain is Aspartyl/glutamyl-tRNA(Asn/Gln) amidotransferase subunit C, found in Streptococcus pyogenes serotype M49 (strain NZ131).